The chain runs to 834 residues: Probable receptor-like protein kinase At2g23200 (834 aa).

The signal sequence occupies residues Met-1–Ser-28. The Extracellular portion of the chain corresponds to Asp-29 to Gly-405. N-linked (GlcNAc...) asparagine glycosylation is found at Asn-61, Asn-149, Asn-221, Asn-246, Asn-277, Asn-289, Asn-314, Asn-352, Asn-361, and Asn-394. A helical membrane pass occupies residues Cys-406–Leu-426. Residues Lys-427 to Arg-834 lie on the Cytoplasmic side of the membrane. The region spanning Phe-488–Val-761 is the Protein kinase domain. ATP-binding positions include Ile-494–Val-502 and Lys-516. The active-site Proton acceptor is Asp-613.

Belongs to the protein kinase superfamily. Ser/Thr protein kinase family.

It is found in the membrane. This chain is Probable receptor-like protein kinase At2g23200, found in Arabidopsis thaliana (Mouse-ear cress).